A 238-amino-acid chain; its full sequence is 3-dehydroquinate dehydratase (238 aa).

Residues 35–37 (ELR) and Arg-70 each bind 3-dehydroquinate. His-133 (proton donor/acceptor) is an active-site residue. Catalysis depends on Lys-160, which acts as the Schiff-base intermediate with substrate. 3-dehydroquinate contacts are provided by Arg-202 and Gln-225.

Belongs to the type-I 3-dehydroquinase family. As to quaternary structure, homodimer.

It catalyses the reaction 3-dehydroquinate = 3-dehydroshikimate + H2O. It participates in metabolic intermediate biosynthesis; chorismate biosynthesis; chorismate from D-erythrose 4-phosphate and phosphoenolpyruvate: step 3/7. Involved in the third step of the chorismate pathway, which leads to the biosynthesis of aromatic amino acids. Catalyzes the cis-dehydration of 3-dehydroquinate (DHQ) and introduces the first double bond of the aromatic ring to yield 3-dehydroshikimate. This chain is 3-dehydroquinate dehydratase, found in Staphylococcus aureus (strain MSSA476).